A 232-amino-acid polypeptide reads, in one-letter code: Small ribosomal subunit protein uS3 (232 aa).

The KH type-2 domain occupies 39–107; the sequence is IREILHKELK…DVVINIVEIR (69 aa).

Belongs to the universal ribosomal protein uS3 family. Part of the 30S ribosomal subunit. Forms a tight complex with proteins S10 and S14.

Its function is as follows. Binds the lower part of the 30S subunit head. Binds mRNA in the 70S ribosome, positioning it for translation. In Rhodopseudomonas palustris (strain BisB18), this protein is Small ribosomal subunit protein uS3.